The following is a 329-amino-acid chain: UDP-sugar transporter sqv-7 (329 aa).

Transmembrane regions (helical) follow at residues 15–34 (SAVFYGVISVLIVFVNKILL), 41–63 (SFLFVGVGQMMATILILFFAKMF), 86–108 (YFFNLISGLGGTQMINLPMFTVL), 129–151 (SKAVKISVGLMIGGSFIAAIYDL), 155–174 (ALGYTMIFINNICTAALGVY), 187–209 (YGLMFYNCLFMLLPALCVVQYTG), 224–246 (TSSVWTCFLLSCICGFVLNYSLV), 253–275 (SALTTTCVGPIKNLFVTYVGMFS), and 280–302 (VFQWANFTGINVSVFGSILYTYV).

Belongs to the TPT transporter family. SLC35D subfamily.

The protein resides in the golgi apparatus membrane. In terms of biological role, acts as a transporter of UDP-glucuronic acid (UDP-GlcA), UDP-N-acetylgalactosamine (UDP-GalNAc) and UDP-galactose (UDP-Gal) from the cytoplasm into the Golgi lumen. Involved in the biosynthesis of glycoconjugates that play a pivotal role in development. Involved in the synthesis of chondroitin sulfate and heparan sulfate proteoglycans. Required for embryonic development. Involved in vulva epithelium invagination and embryonic development. Involved in the directed migration of hermaphrodite-specific neurons. The polypeptide is UDP-sugar transporter sqv-7 (sqv-7) (Caenorhabditis elegans).